The following is a 380-amino-acid chain: Protein Wnt-5a (380 aa).

A signal peptide spans Met-1 to Ser-35. Positions Phe-36–Tyr-61 are excised as a propeptide. Cys-104 and Cys-115 are disulfide-bonded. Residues Asn-114 and Asn-120 are each glycosylated (N-linked (GlcNAc...) asparagine). 10 disulfides stabilise this stretch: Cys-154–Cys-162, Cys-164–Cys-182, Cys-238–Cys-252, Cys-240–Cys-247, Cys-309–Cys-340, Cys-325–Cys-335, Cys-339–Cys-379, Cys-355–Cys-370, Cys-357–Cys-367, and Cys-362–Cys-363. Ser-244 carries the O-palmitoleoyl serine; by PORCN lipid modification. Asn-312 and Asn-326 each carry an N-linked (GlcNAc...) asparagine glycan.

Belongs to the Wnt family. Forms a soluble 1:1 complex with AFM; this prevents oligomerization and is required for prolonged biological activity. The complex with AFM may represent the physiological form in body fluids. Homooligomer; disulfide-linked, leading to inactivation (in vitro). Interacts with PORCN. Interacts with WLS. Interacts with glypican GCP3. Interacts with PKD1 (via extracellular domain). Interacts with TMEM67. In terms of processing, glycosylation is necessary for secretion but not for activity. Palmitoleoylation is required for efficient binding to frizzled receptors. Depalmitoleoylation leads to Wnt signaling pathway inhibition. Post-translationally, proteolytic processing by TIKI1 and TIKI2 promotes oxidation and formation of large disulfide-bond oligomers, leading to inactivation of WNT5A.

It localises to the secreted. Its subcellular location is the extracellular space. The protein localises to the extracellular matrix. Ligand for members of the frizzled family of seven transmembrane receptors. Can activate or inhibit canonical Wnt signaling, depending on receptor context. In the presence of FZD4, activates beta-catenin signaling. In the presence of ROR2, inhibits the canonical Wnt pathway by promoting beta-catenin degradation through a GSK3-independent pathway which involves down-regulation of beta-catenin-induced reporter gene expression. Suppression of the canonical pathway allows chondrogenesis to occur. Inhibits tumor formation. Stimulates cell migration. Decreases proliferation, migration, invasiveness and clonogenicity of carcinoma cells and may act as a tumor suppressor. Mediates motility of melanoma cells. Required during embryogenesis for extension of the primary anterior-posterior axis and for outgrowth of limbs and the genital tubercle. Inhibits type II collagen expression in chondrocytes. The sequence is that of Protein Wnt-5a from Oryctolagus cuniculus (Rabbit).